We begin with the raw amino-acid sequence, 962 residues long: Protease 3 (962 aa).

Residues methionine 1 to alanine 23 form the signal peptide. Position 88 (histidine 88) interacts with Zn(2+). Glutamate 91 acts as the Proton acceptor in catalysis. Residues histidine 92 and glutamate 169 each contribute to the Zn(2+) site.

The protein belongs to the peptidase M16 family. Monomer. Zn(2+) is required as a cofactor.

It is found in the periplasm. It catalyses the reaction Preferential cleavage of 16-Tyr-|-Leu-17 and 25-Phe-|-Tyr-26 bonds of oxidized insulin B chain. Also acts on other substrates of Mw less than 7 kDa such as insulin and glucagon.. Functionally, endopeptidase that degrades small peptides of less than 7 kDa, such as glucagon and insulin. In Shigella flexneri, this protein is Protease 3 (ptrA).